An 89-amino-acid chain; its full sequence is Small ribosomal subunit protein uS15 (89 aa).

It belongs to the universal ribosomal protein uS15 family. Part of the 30S ribosomal subunit. Forms a bridge to the 50S subunit in the 70S ribosome, contacting the 23S rRNA.

One of the primary rRNA binding proteins, it binds directly to 16S rRNA where it helps nucleate assembly of the platform of the 30S subunit by binding and bridging several RNA helices of the 16S rRNA. Functionally, forms an intersubunit bridge (bridge B4) with the 23S rRNA of the 50S subunit in the ribosome. The protein is Small ribosomal subunit protein uS15 of Marinomonas sp. (strain MWYL1).